Here is a 234-residue protein sequence, read N- to C-terminus: Chalcone--flavanone isomerase 2 (234 aa).

Substrate is bound by residues T50, N115, and S192.

It belongs to the chalcone isomerase family.

The enzyme catalyses a chalcone = a flavanone.. The protein operates within secondary metabolite biosynthesis; flavonoid biosynthesis. Catalyzes the intramolecular cyclization of bicyclic chalcones into tricyclic (S)-flavanones. Responsible for the isomerization of 4,2',4',6'-tetrahydroxychalcone (also termed chalcone) into naringenin. This is Chalcone--flavanone isomerase 2 (CHI2) from Vitis vinifera (Grape).